The sequence spans 993 residues: Mediator of RNA polymerase II transcription subunit 24 (993 aa).

Phosphoserine is present on residues Ser827 and Ser829.

Belongs to the Mediator complex subunit 24 family. As to quaternary structure, component of the Mediator complex, which includes at least CDK8, MED4, MED6, MED11, MED14, MED17, MED18, MED20, MED21, MED22, MED27, MED28, MED30 and MED31.

Its subcellular location is the nucleus. Component of the Mediator complex, a coactivator involved in the regulated transcription of nearly all RNA polymerase II-dependent genes. Mediator functions as a bridge to convey information from gene-specific regulatory proteins to the basal RNA polymerase II transcription machinery. Mediator is recruited to promoters by direct interactions with regulatory proteins and serves as a scaffold for the assembly of a functional preinitiation complex with RNA polymerase II and the general transcription factors. Required for activated transcription of the MtnA, MtnB and MtnD genes. The polypeptide is Mediator of RNA polymerase II transcription subunit 24 (MED24) (Drosophila melanogaster (Fruit fly)).